Consider the following 349-residue polypeptide: Hypoxia-inducible factor 1-alpha inhibitor (349 aa).

Residues methionine 1–alanine 10 show a composition bias toward low complexity. Residues methionine 1–arginine 51 form a disordered region. N-acetylalanine is present on alanine 2. An interaction with VHL region spans residues alanine 2 to phenylalanine 125. The 171-residue stretch at glutamate 142–alanine 312 folds into the JmjC domain. A 2-oxoglutarate-binding site is contributed by tyrosine 145. Substrate contacts are provided by residues aspartate 152 and glutamine 181–threonine 183. Threonine 196 contacts 2-oxoglutarate. 2 residues coordinate Fe cation: histidine 199 and aspartate 201. A substrate-binding site is contributed by aspartate 201–glutamine 203. Residues asparagine 205 and lysine 214 each contribute to the 2-oxoglutarate site. A substrate-binding site is contributed by arginine 238–glutamine 239. Histidine 279 contributes to the Fe cation binding site. Asparagine 294 lines the 2-oxoglutarate pocket. Substrate contacts are provided by alanine 300 and asparagine 321.

As to quaternary structure, homodimer; homodimerization is essential for catalytic activity. Interacts with VHL and HIF1A. Part of a complex with VHL, HIF1A and HDAC1 or HDAC2 or HDAC3. Interacts with NFKB1 and NFKBIA. Interacts with NOTCH1, NOTCH2 and NOTCH3 but not with NOTCH4. Interacts with APBA3; binding inhibits HIF1AN binding to HIF1A. Interacts with TNKS2. Interacts with PPP1R12A. Interacts with ASB4. Interacts with UBE3A. Interacts with ANKS3. Interacts with NECAB3; the interaction is indirect and seems to be mediated by APBA3. Requires Fe(2+) as cofactor.

The protein resides in the nucleus. The protein localises to the cytoplasm. Its subcellular location is the perinuclear region. It catalyses the reaction L-asparaginyl-[hypoxia-inducible factor alpha subunit] + 2-oxoglutarate + O2 = (3S)-3-hydroxy-L-asparaginyl-[hypoxia-inducible factor alpha subunit] + succinate + CO2. The enzyme catalyses L-histidyl-[ankyrin-repeat domain protein] + 2-oxoglutarate + O2 = (3S)-3-hydroxy-L-histidyl-[ankyrin-repeat domain protein] + succinate + CO2. It carries out the reaction L-asparaginyl-[ankyrin-repeat domain protein] + 2-oxoglutarate + O2 = (3S)-3-hydroxy-L-asparaginyl-[ankyrin-repeat domain protein] + succinate + CO2. The catalysed reaction is L-aspartyl-[ankyrin-repeat domain protein] + 2-oxoglutarate + O2 = (3S)-3-hydroxy-L-aspartyl-[ankyrin-repeat domain protein] + succinate + CO2. In terms of biological role, hydroxylates HIF-1 alpha at 'Asn-803' in the C-terminal transactivation domain (CAD). Functions as an oxygen sensor and, under normoxic conditions, the hydroxylation prevents interaction of HIF-1 with transcriptional coactivators including Cbp/p300-interacting transactivator. Involved in transcriptional repression through interaction with HIF1A, VHL and histone deacetylases. Hydroxylates specific Asn residues within ankyrin repeat domains (ARD) of NFKB1, NFKBIA, NOTCH1, ASB4, PPP1R12A and several other ARD-containing proteins. Also hydroxylates Asp and His residues within ARDs of ANK1 and TNKS2, respectively. Negatively regulates NOTCH1 activity, accelerating myogenic differentiation. Positively regulates ASB4 activity, promoting vascular differentiation. The polypeptide is Hypoxia-inducible factor 1-alpha inhibitor (HIF1AN) (Homo sapiens (Human)).